The chain runs to 121 residues: Centrocin 2 (121 aa).

The first 20 residues, 1–20 (MMIKIAVVLCAVMATSMVFA), serve as a signal peptide directing secretion. A propeptide spanning residues 21-50 (NDVKEQELADLLDLLISEEVSSPDDAVAES) is cleaved from the precursor. A 6'-bromotryptophan mark is found at Trp51 and Trp59. An intrachain disulfide couples Cys77 to Cys112. A propeptide spanning residues 83 to 106 (SPQEARAKVLEAFPEMKESDLDEE) is cleaved from the precursor. A Pyrrolidone carboxylic acid modification is found at Gln107. Histidine amide is present on His119.

In terms of assembly, heterodimer of a light and a heavy chain, probably disulfide-linked.

Functionally, has antimicrobial activity against Gram-negative bacteria, Gram-positive bacteria and against fungi with minimum inhibitory concentration (MIC) between 0.78 uM and 50 uM. Shows little hemolytic activity at concentrations up to 12.5 uM but &gt;50% lysis at 100 uM. The chain is Centrocin 2 from Echinus esculentus (Sea urchin).